The following is a 156-amino-acid chain: Small ribosomal subunit protein uS7 (156 aa).

This sequence belongs to the universal ribosomal protein uS7 family. Part of the 30S ribosomal subunit. Contacts proteins S9 and S11.

One of the primary rRNA binding proteins, it binds directly to 16S rRNA where it nucleates assembly of the head domain of the 30S subunit. Is located at the subunit interface close to the decoding center, probably blocks exit of the E-site tRNA. The sequence is that of Small ribosomal subunit protein uS7 from Solidesulfovibrio magneticus (strain ATCC 700980 / DSM 13731 / RS-1) (Desulfovibrio magneticus).